The chain runs to 486 residues: NADH-quinone oxidoreductase subunit N (486 aa).

Transmembrane regions (helical) follow at residues 14–34 (SIAP…LNFI), 45–65 (MLAI…SGIV), 77–97 (FAFI…PLTL), 105–125 (CSLA…EFMV), 130–150 (LIVI…LIAL), 163–183 (YFTM…IFYL), 203–223 (ILIA…LSLI), 237–257 (SEVM…IVAM), 268–288 (IAFI…LANI), 299–319 (MLAF…VIGT), 326–346 (LFLY…VLWF), 377–397 (FLMA…VFWG), 409–429 (GFIF…YYYL), and 459–479 (FIIT…KFWT).

Belongs to the complex I subunit 2 family. NDH-1 is composed of 14 different subunits. Subunits NuoA, H, J, K, L, M, N constitute the membrane sector of the complex.

The protein localises to the cell inner membrane. It catalyses the reaction a quinone + NADH + 5 H(+)(in) = a quinol + NAD(+) + 4 H(+)(out). Functionally, NDH-1 shuttles electrons from NADH, via FMN and iron-sulfur (Fe-S) centers, to quinones in the respiratory chain. The immediate electron acceptor for the enzyme in this species is believed to be ubiquinone. Couples the redox reaction to proton translocation (for every two electrons transferred, four hydrogen ions are translocated across the cytoplasmic membrane), and thus conserves the redox energy in a proton gradient. This chain is NADH-quinone oxidoreductase subunit N, found in Campylobacter hominis (strain ATCC BAA-381 / DSM 21671 / CCUG 45161 / LMG 19568 / NCTC 13146 / CH001A).